Reading from the N-terminus, the 475-residue chain is ATP synthase subunit beta (475 aa).

160–167 (GGAGVGKT) contacts ATP.

It belongs to the ATPase alpha/beta chains family. F-type ATPases have 2 components, CF(1) - the catalytic core - and CF(0) - the membrane proton channel. CF(1) has five subunits: alpha(3), beta(3), gamma(1), delta(1), epsilon(1). CF(0) has three main subunits: a(1), b(2) and c(9-12). The alpha and beta chains form an alternating ring which encloses part of the gamma chain. CF(1) is attached to CF(0) by a central stalk formed by the gamma and epsilon chains, while a peripheral stalk is formed by the delta and b chains.

It is found in the cell membrane. The catalysed reaction is ATP + H2O + 4 H(+)(in) = ADP + phosphate + 5 H(+)(out). In terms of biological role, produces ATP from ADP in the presence of a proton gradient across the membrane. The catalytic sites are hosted primarily by the beta subunits. This is ATP synthase subunit beta from Mycolicibacterium vanbaalenii (strain DSM 7251 / JCM 13017 / BCRC 16820 / KCTC 9966 / NRRL B-24157 / PYR-1) (Mycobacterium vanbaalenii).